The following is a 685-amino-acid chain: Protein DIA2 (685 aa).

TPR repeat units follow at residues 6 to 39, 70 to 103, and 104 to 137; these read IDRSLELGIQCFQGEDYKGAAELFSKSLQLARSY, LVLLDNRAATWEKLNKLDRALADAAYMITVDAYN, and LKGYIRRGKVLQKLGRYEEALQVYENGLKQAGEA. The F-box domain occupies 207 to 254; it reads IDYIATLPVEIIERIMANMDTRSIIRCYSVCKLWKYRLERLPHLYQEF. 7 LRR repeats span residues 300 to 323, 353 to 377, 454 to 480, 499 to 517, 518 to 542, 562 to 585, and 598 to 622; these read ILLLSRLMIGTRQLALMAKKCKAE, KLNLHELYTRTTSMTHLELVLNFHT, MPNLQELWLERNTGIEFHELITQIVQV, FDRMDQSQLGLGEEALREV, FQSLESLDLMNTRFDPQLLLLLLQP, ARDLEILTLIFQQLPALTDLLLPN, and RKNIKGMKLKRLDLSFIPSLKGYEL.

It belongs to the DIA2 family. As to quaternary structure, forms a SCF ubiquitin ligase complex which binds to DNA replication origins.

It localises to the nucleus. In terms of biological role, F-box protein component of a SCF ubiquitin ligase complex involved in ubiquitin-dependent protein degradation. The SCF-DIA2 complex is specifically involved in the pheromone induced degradation of phosphorylated TEC1. Involved in DNA replication, genome stability, and the control of cell cycle, probably through its association to replication origins to facilitate the ubiquitination of another origin-binding protein. This is Protein DIA2 (DIA2) from Eremothecium gossypii (strain ATCC 10895 / CBS 109.51 / FGSC 9923 / NRRL Y-1056) (Yeast).